Consider the following 257-residue polypeptide: Outer membrane protein YaiO (257 aa).

The first 19 residues, 1-19 (MIKRTLLAAAIFSALPAYA), serve as a signal peptide directing secretion.

Its subcellular location is the cell outer membrane. This is Outer membrane protein YaiO (yaiO) from Escherichia coli (strain K12).